Reading from the N-terminus, the 346-residue chain is Ribulose-5-phosphate reductase (346 aa).

Zn(2+)-binding residues include cysteine 45, histidine 71, glutamate 72, and glutamate 151.

It belongs to the zinc-containing alcohol dehydrogenase family. Zn(2+) serves as cofactor.

It carries out the reaction D-ribitol 5-phosphate + NADP(+) = D-ribulose 5-phosphate + NADPH + H(+). Its pathway is cell wall biogenesis; poly(ribitol phosphate) teichoic acid biosynthesis. In terms of biological role, catalyzes the NADPH dependent reduction of D-ribulose 5-phosphate to D-ribitol 5-phosphate. In Streptococcus pneumoniae (strain ATCC BAA-255 / R6), this protein is Ribulose-5-phosphate reductase.